Here is a 203-residue protein sequence, read N- to C-terminus: GTP-binding protein ypt1 (203 aa).

GTP contacts are provided by residues 15-23 (GDSGVGKSC), 33-40 (YTESYIST), 63-67 (DTAGQ), 121-124 (NKSD), and 151-153 (SAK). The Effector region signature appears at 37-45 (YISTIGVDF). A disordered region spans residues 180 to 203 (NNTKASVNVSPGHGVSNNSSGGCC). S-geranylgeranyl cysteine attachment occurs at residues Cys-202 and Cys-203.

It belongs to the small GTPase superfamily. Rab family.

The protein localises to the endoplasmic reticulum membrane. It localises to the golgi apparatus membrane. The protein resides in the cytoplasm. Its subcellular location is the preautophagosomal structure membrane. Rab activation is generally mediated by a guanine exchange factor (GEF), while inactivation through hydrolysis of bound GTP is catalyzed by a GTPase activating protein (GAP). In terms of biological role, the small GTPases Rab are key regulators of intracellular membrane trafficking, from the formation of transport vesicles to their fusion with membranes. Rabs cycle between an inactive GDP-bound form and an active GTP-bound form that is able to recruit to membranes different set of downstream effectors directly responsible for vesicle formation, movement, tethering and fusion. Ypt-1 regulates the trafficking of secretory vesicles from the endoplasmic reticulum (ER) to the Golgi. Plays a role in the initial events of the autophagic vacuole development which take place at specialized regions of the endoplasmic reticulum. Also involved in the recycling of membrane proteins. This is GTP-binding protein ypt1 (ypt-1) from Neurospora crassa (strain ATCC 24698 / 74-OR23-1A / CBS 708.71 / DSM 1257 / FGSC 987).